Here is a 441-residue protein sequence, read N- to C-terminus: Ribosomal protein uS12 methylthiotransferase RimO (441 aa).

One can recognise an MTTase N-terminal domain in the interval 8–118 (PKIGFVSLGC…VLQHVHHYVP (111 aa)). Residues Cys-17, Cys-53, Cys-82, Cys-150, Cys-154, and Cys-157 each coordinate [4Fe-4S] cluster. The region spanning 136-373 (LTPRHYAYLK…MQLQQQISAE (238 aa)) is the Radical SAM core domain. The TRAM domain occupies 376-441 (QEKVGREILV…DEYDLWGSRV (66 aa)).

Belongs to the methylthiotransferase family. RimO subfamily. [4Fe-4S] cluster is required as a cofactor.

It is found in the cytoplasm. The enzyme catalyses L-aspartate(89)-[ribosomal protein uS12]-hydrogen + (sulfur carrier)-SH + AH2 + 2 S-adenosyl-L-methionine = 3-methylsulfanyl-L-aspartate(89)-[ribosomal protein uS12]-hydrogen + (sulfur carrier)-H + 5'-deoxyadenosine + L-methionine + A + S-adenosyl-L-homocysteine + 2 H(+). Catalyzes the methylthiolation of an aspartic acid residue of ribosomal protein uS12. In Salmonella typhi, this protein is Ribosomal protein uS12 methylthiotransferase RimO.